A 257-amino-acid polypeptide reads, in one-letter code: Ribonuclease HII (257 aa).

Positions 72–257 (TYIAGIDEVG…FAPIKDMIQK (186 aa)) constitute an RNase H type-2 domain. Residues Asp-78, Glu-79, and Asp-170 each coordinate a divalent metal cation.

The protein belongs to the RNase HII family. Requires Mn(2+) as cofactor. Mg(2+) serves as cofactor.

It is found in the cytoplasm. The enzyme catalyses Endonucleolytic cleavage to 5'-phosphomonoester.. In terms of biological role, endonuclease that specifically degrades the RNA of RNA-DNA hybrids. The sequence is that of Ribonuclease HII from Bacillus cereus (strain G9842).